A 109-amino-acid chain; its full sequence is Nucleoid-associated protein VV2410 (109 aa).

The segment at 1-22 is disordered; it reads MFGKGGMGNLMKQAQQMQERMQ.

Belongs to the YbaB/EbfC family. In terms of assembly, homodimer.

The protein resides in the cytoplasm. It localises to the nucleoid. Functionally, binds to DNA and alters its conformation. May be involved in regulation of gene expression, nucleoid organization and DNA protection. The protein is Nucleoid-associated protein VV2410 of Vibrio vulnificus (strain YJ016).